The sequence spans 368 residues: Spermidine/putrescine import ATP-binding protein PotA (368 aa).

Residues 8-238 form the ABC transporter domain; the sequence is IELRGVTKNF…PANLYVARFV (231 aa). Position 40-47 (40-47) interacts with ATP; sequence GPSGCGKT.

This sequence belongs to the ABC transporter superfamily. Spermidine/putrescine importer (TC 3.A.1.11.1) family. In terms of assembly, the complex is composed of two ATP-binding proteins (PotA), two transmembrane proteins (PotB and PotC) and a solute-binding protein (PotD).

The protein resides in the cell inner membrane. It carries out the reaction ATP + H2O + polyamine-[polyamine-binding protein]Side 1 = ADP + phosphate + polyamineSide 2 + [polyamine-binding protein]Side 1.. Its function is as follows. Part of the ABC transporter complex PotABCD involved in spermidine/putrescine import. Responsible for energy coupling to the transport system. This is Spermidine/putrescine import ATP-binding protein PotA from Nitratidesulfovibrio vulgaris (strain ATCC 29579 / DSM 644 / CCUG 34227 / NCIMB 8303 / VKM B-1760 / Hildenborough) (Desulfovibrio vulgaris).